The chain runs to 987 residues: Collagen alpha-1(I) chain (987 aa).

The tract at residues 1 to 987 (GPMGPSGPRG…PGPPGPPGPP (987 aa)) is disordered. Positions 20 to 39 (PQGFQGPPGEPGEPGASGPM) are enriched in low complexity. The span at 51-65 (NGDDGEAGKPGRPGE) shows a compositional bias: basic and acidic residues. Ser93 carries the post-translational modification Phosphoserine. Composition is skewed to low complexity over residues 101–117 (DAGPAGPKGEPGSPGEN) and 141–153 (AGARGNDGATGAA). The segment covering 155–167 (PPGPTGPAGPPGF) has biased composition (pro residues). 10 stretches are compositionally biased toward low complexity: residues 201 to 251 (AGAA…APGP), 354 to 380 (KGITGSPGSPGPDGKTGPPGPAGQDGR), 389 to 408 (ARGQAGVMGFPGPKGAAGEP), 422 to 444 (AVGAPGKDGEAGAPGATGPAGPA), 516 to 543 (NGAPGNDGAKGDAGAPGAPGSQGAPGIQ), 602 to 614 (PNGPAGPTGARGA), 627 to 654 (AGFAGPPGADGQPGAKGEPGDAGAKGDA), 662 to 677 (PTGAPGPIGNVGAPGP), 686 to 696 (ATGFPGAAGRV), and 737 to 752 (SGEKGSPGADGPAGAP). Positions 756–765 (GPQGIGGQRG) are enriched in gly residues. The segment covering 799-809 (PPGPMGPPGIA) has biased composition (pro residues). Low complexity predominate over residues 811–826 (PPGESGREGSPGAEGS). A compositionally biased stretch (pro residues) spans 845 to 860 (AGPPGAPGAPGAPGPV). Basic and acidic residues predominate over residues 896-907 (RGDKGETGEQGD). Residues 923 to 956 (PGEQGPSGASGPAGPRGPPGSAGAPGKDGINGIP) are compositionally biased toward low complexity. Positions 972–987 (VGPPGPPGPPGPPGPP) are enriched in pro residues.

The protein belongs to the fibrillar collagen family. In terms of assembly, trimers of one alpha 2(I) and two alpha 1(I) chains. In terms of processing, prolines at the third position of the tripeptide repeating unit (G-X-Y) are hydroxylated in some or all of the chains. As to expression, forms the fibrils of tendon, ligaments and bones. In bones, the fibrils are mineralized with calcium hydroxyapatite.

Its subcellular location is the secreted. It localises to the extracellular space. It is found in the extracellular matrix. Type I collagen is a member of group I collagen (fibrillar forming collagen). The sequence is that of Collagen alpha-1(I) chain from Orycteropus afer (Aardvark).